The following is a 402-amino-acid chain: Xylose/arabinose-binding protein XylF (402 aa).

Residues glycine 38–alanine 58 traverse the membrane as a helical segment.

This sequence belongs to the bacterial solute-binding protein 2 family. In terms of assembly, the complex is composed of two ATP-binding proteins (XylG), two transmembrane proteins (XylH) and a solute-binding protein (XylF).

It is found in the cell membrane. Functionally, part of the ABC transporter complex XylFGH involved in the uptake of xylose and arabinose. The polypeptide is Xylose/arabinose-binding protein XylF (Sulfolobus acidocaldarius (strain ATCC 33909 / DSM 639 / JCM 8929 / NBRC 15157 / NCIMB 11770)).